The chain runs to 643 residues: Long-chain fatty acid transport protein 4 (643 aa).

The next 2 membrane-spanning stretches (helical) occupy residues 20 to 42 (LPWTQVGFSLLFLYLGSGGWRFI) and 139 to 156 (FVGLWLGMAKLGVEAALI). 243–254 (YIYTSGTTGLPK) lines the AMP pocket.

Belongs to the ATP-dependent AMP-binding enzyme family. In terms of tissue distribution, expressed at highest levels in brain, testis, colon and kidney. Expressed at medium levels in heart and liver, small intestine and stomach. Expressed at low levels in peripheral leukocytes, bone marrow, skeletal muscle and aorta. Expressed in adipose tissue. Expressed in brain gray matter.

The protein resides in the endoplasmic reticulum membrane. The enzyme catalyses a fatty acid(in) = a fatty acid(out). It catalyses the reaction (9Z,12Z)-octadecadienoate(out) = (9Z,12Z)-octadecadienoate(in). It carries out the reaction (9Z)-octadecenoate(out) = (9Z)-octadecenoate(in). The catalysed reaction is hexadecanoate(out) = hexadecanoate(in). The enzyme catalyses a long-chain fatty acid + ATP + CoA = a long-chain fatty acyl-CoA + AMP + diphosphate. It catalyses the reaction hexadecanoate + ATP + CoA = hexadecanoyl-CoA + AMP + diphosphate. It carries out the reaction (E)-hexadec-2-enoate + ATP + CoA = (2E)-hexadecenoyl-CoA + AMP + diphosphate. The catalysed reaction is (9Z)-octadecenoate + ATP + CoA = (9Z)-octadecenoyl-CoA + AMP + diphosphate. The enzyme catalyses (5Z,8Z,11Z,14Z)-eicosatetraenoate + ATP + CoA = (5Z,8Z,11Z,14Z)-eicosatetraenoyl-CoA + AMP + diphosphate. It catalyses the reaction a very long-chain fatty acid + ATP + CoA = a very long-chain fatty acyl-CoA + AMP + diphosphate. It carries out the reaction tetracosanoate + ATP + CoA = tetracosanoyl-CoA + AMP + diphosphate. In terms of biological role, mediates the levels of long-chain fatty acids (LCFA) in the cell by facilitating their transport across cell membranes. Appears to be the principal fatty acid transporter in small intestinal enterocytes. Also functions as an acyl-CoA ligase catalyzing the ATP-dependent formation of fatty acyl-CoA using LCFA and very-long-chain fatty acids (VLCFA) as substrates, which prevents fatty acid efflux from cells and might drive more fatty acid uptake. Plays a role in the formation of the epidermal barrier. Required for fat absorption in early embryogenesis. Probably involved in fatty acid transport across the blood barrier. Indirectly inhibits RPE65 via substrate competition and via production of VLCFA derivatives like lignoceroyl-CoA. Prevents light-induced degeneration of rods and cones. The polypeptide is Long-chain fatty acid transport protein 4 (Homo sapiens (Human)).